The chain runs to 220 residues: Probable nicotinate-nucleotide adenylyltransferase (220 aa).

It belongs to the NadD family.

The catalysed reaction is nicotinate beta-D-ribonucleotide + ATP + H(+) = deamido-NAD(+) + diphosphate. The protein operates within cofactor biosynthesis; NAD(+) biosynthesis; deamido-NAD(+) from nicotinate D-ribonucleotide: step 1/1. In terms of biological role, catalyzes the reversible adenylation of nicotinate mononucleotide (NaMN) to nicotinic acid adenine dinucleotide (NaAD). The protein is Probable nicotinate-nucleotide adenylyltransferase of Serratia proteamaculans (strain 568).